Reading from the N-terminus, the 217-residue chain is Trimethylamine corrinoid protein 2 (217 aa).

The B12-binding N-terminal domain occupies 1 to 92 (MAGKEEIIAK…EMEKRKAKTT (92 aa)). The region spanning 94 to 217 (LGTVIIGTIE…VNKIKAAIKS (124 aa)) is the B12-binding domain. His-107 contributes to the methylcob(III)alamin binding site.

The protein belongs to the methylamine corrinoid protein family. As to quaternary structure, can form a complex with MttB.

The protein operates within one-carbon metabolism; methanogenesis from trimethylamine. Acts probably as a methyl group carrier between MttB and either MtbA or MtaA. The polypeptide is Trimethylamine corrinoid protein 2 (mttC2) (Methanosarcina acetivorans (strain ATCC 35395 / DSM 2834 / JCM 12185 / C2A)).